The following is a 358-amino-acid chain: Pyruvate dehydrogenase E1 component subunit alpha (358 aa).

Heterodimer of an alpha and a beta chain. Thiamine diphosphate serves as cofactor.

It carries out the reaction N(6)-[(R)-lipoyl]-L-lysyl-[protein] + pyruvate + H(+) = N(6)-[(R)-S(8)-acetyldihydrolipoyl]-L-lysyl-[protein] + CO2. In terms of biological role, the pyruvate dehydrogenase complex catalyzes the overall conversion of pyruvate to acetyl-CoA and CO(2). It contains multiple copies of three enzymatic components: pyruvate dehydrogenase (E1), dihydrolipoamide acetyltransferase (E2) and lipoamide dehydrogenase (E3). The polypeptide is Pyruvate dehydrogenase E1 component subunit alpha (pdhA) (Mycoplasma genitalium (strain ATCC 33530 / DSM 19775 / NCTC 10195 / G37) (Mycoplasmoides genitalium)).